The chain runs to 775 residues: Probable ubiquitin carboxyl-terminal hydrolase creB (775 aa).

Positions Met-1–Pro-45 are disordered. The segment covering Leu-36–Pro-45 has biased composition (basic and acidic residues). In terms of domain architecture, USP spans Tyr-55–Thr-468. Cys-64 acts as the Nucleophile in catalysis. Disordered stretches follow at residues Glu-113–Glu-146 and Ala-238–Asn-269. Residues Ser-256–Asn-269 show a composition bias toward polar residues. Residue His-419 is the Proton acceptor of the active site. Residues Leu-496–Ser-775 are disordered. Composition is skewed to low complexity over residues Glu-546 to Ser-566 and Glu-576 to Pro-585. Residues Lys-586–Leu-653 adopt a coiled-coil conformation. Positions Ala-589–Gln-662 are enriched in basic and acidic residues. A compositionally biased stretch (basic residues) spans Arg-668–Arg-679. Positions Ser-705–Asn-725 are enriched in low complexity. Over residues Thr-739–Gly-757 the composition is skewed to basic and acidic residues. Residues His-758 to Ser-775 are compositionally biased toward basic residues.

It belongs to the peptidase C19 family. In terms of assembly, interacts with creA, creC and qutD.

It carries out the reaction Thiol-dependent hydrolysis of ester, thioester, amide, peptide and isopeptide bonds formed by the C-terminal Gly of ubiquitin (a 76-residue protein attached to proteins as an intracellular targeting signal).. Functionally, ubiquitin thioesterase component of the regulatory network controlling carbon source utilization through ubiquitination and deubiquitination involving creA, creB, creC, creD and acrB. Deubiquitinates the creA catabolic repressor and the quinate permease qutD. Also plays a role in response to carbon starvation and the control of extracellular proteases activity. The sequence is that of Probable ubiquitin carboxyl-terminal hydrolase creB (creB) from Aspergillus fumigatus (strain ATCC MYA-4609 / CBS 101355 / FGSC A1100 / Af293) (Neosartorya fumigata).